The following is a 294-amino-acid chain: Phosphoribosylaminoimidazole-succinocarboxamide synthase (294 aa).

Belongs to the SAICAR synthetase family.

The catalysed reaction is 5-amino-1-(5-phospho-D-ribosyl)imidazole-4-carboxylate + L-aspartate + ATP = (2S)-2-[5-amino-1-(5-phospho-beta-D-ribosyl)imidazole-4-carboxamido]succinate + ADP + phosphate + 2 H(+). The protein operates within purine metabolism; IMP biosynthesis via de novo pathway; 5-amino-1-(5-phospho-D-ribosyl)imidazole-4-carboxamide from 5-amino-1-(5-phospho-D-ribosyl)imidazole-4-carboxylate: step 1/2. The protein is Phosphoribosylaminoimidazole-succinocarboxamide synthase of Thermoplasma acidophilum (strain ATCC 25905 / DSM 1728 / JCM 9062 / NBRC 15155 / AMRC-C165).